A 420-amino-acid polypeptide reads, in one-letter code: Argininosuccinate synthase (420 aa).

11–19 (AFSGGLDTT) serves as a coordination point for ATP. Tyr-88 contacts L-citrulline. Gly-118 is a binding site for ATP. L-aspartate is bound by residues Thr-120, Asn-124, and Asp-125. An L-citrulline-binding site is contributed by Asn-124. Residues Arg-128, Ser-174, Ser-183, Glu-257, and Tyr-269 each contribute to the L-citrulline site. The tract at residues 401–420 (KGAAVTDGSGDHAASEDTEE) is disordered. The span at 409–420 (SGDHAASEDTEE) shows a compositional bias: basic and acidic residues.

The protein belongs to the argininosuccinate synthase family. Type 1 subfamily. Homotetramer.

The protein localises to the cytoplasm. It carries out the reaction L-citrulline + L-aspartate + ATP = 2-(N(omega)-L-arginino)succinate + AMP + diphosphate + H(+). It participates in amino-acid biosynthesis; L-arginine biosynthesis; L-arginine from L-ornithine and carbamoyl phosphate: step 2/3. The polypeptide is Argininosuccinate synthase (Haloarcula marismortui (strain ATCC 43049 / DSM 3752 / JCM 8966 / VKM B-1809) (Halobacterium marismortui)).